We begin with the raw amino-acid sequence, 359 residues long: MVDIIFHYPFLGAMGDHSKKKPGTAMCVGCGSQIHDQFILRVSPDLEWHAACLKCAECSQYLDETCTCFVRDGKTYCKRDYVRLFGIKCAKCQVGFSSSDLVMRARDSVYHIECFRCSVCSRQLLPGDEFSLREHELLCRADHGLLLERAAAGSPRSPGPLPGARGLHLPDAGSGRQPALRPHVHKQTEKTTRVRTVLNEKQLHTLRTCYAANPRPDALMKEQLVEMTGLSPRVIRVWFQNKRCKDKKKSILMKQLQQQQHSDKTSLQGLTGTPLVAGSPIRHENAVQGSAVEVQTYQPPWKALSEFALQSDLDQPAFQQLVSFSESGSLGNSSGSDVTSLSSQLPDTPNSMVPSPVET.

2 consecutive LIM zinc-binding domains span residues 25–86 and 87–149; these read AMCV…RLFG and IKCA…LLER. The interval 151–191 is disordered; it reads AAGSPRSPGPLPGARGLHLPDAGSGRQPALRPHVHKQTEKT. 2 positions are modified to phosphoserine: serine 154 and serine 157. Residues 191-250 constitute a DNA-binding region (homeobox); that stretch reads TTRVRTVLNEKQLHTLRTCYAANPRPDALMKEQLVEMTGLSPRVIRVWFQNKRCKDKKKS. The tract at residues 272–301 is LIM-binding domain (LID); the sequence is GTPLVAGSPIRHENAVQGSAVEVQTYQPPW. Phosphoserine is present on serine 279. Residues 326–336 show a composition bias toward low complexity; the sequence is ESGSLGNSSGS. Positions 326 to 359 are disordered; the sequence is ESGSLGNSSGSDVTSLSSQLPDTPNSMVPSPVET. Positions 337 to 359 are enriched in polar residues; the sequence is DVTSLSSQLPDTPNSMVPSPVET.

Interacts with LHX4.

It localises to the nucleus. In terms of biological role, transcriptional factor that defines subclasses of motoneurons that segregate into columns in the spinal cord and select distinct axon pathways. The sequence is that of Insulin gene enhancer protein ISL-2 (ISL2) from Homo sapiens (Human).